The chain runs to 460 residues: Chromosomal replication initiator protein DnaA (460 aa).

Residues 1–91 form a domain I, interacts with DnaA modulators region; it reads MNLTSPKVST…SLWQSEDKSI (91 aa). A domain II region spans residues 91–122; it reads IRSIDIQVIEERNSNFNVILKNREESNHNLGS. Positions 123 to 342 are domain III, AAA+ region; that stretch reads PLDPRFTFDN…GALNKVTHTS (220 aa). ATP is bound by residues Gly169, Gly171, Lys172, and Thr173. The segment at 343–460 is domain IV, binds dsDNA; the sequence is LIGRSMTVES…EINRLKKMFK (118 aa).

This sequence belongs to the DnaA family. Oligomerizes as a right-handed, spiral filament on DNA at oriC.

It localises to the cytoplasm. Plays an essential role in the initiation and regulation of chromosomal replication. ATP-DnaA binds to the origin of replication (oriC) to initiate formation of the DNA replication initiation complex once per cell cycle. Binds the DnaA box (a 9 base pair repeat at the origin) and separates the double-stranded (ds)DNA. Forms a right-handed helical filament on oriC DNA; dsDNA binds to the exterior of the filament while single-stranded (ss)DNA is stabiized in the filament's interior. The ATP-DnaA-oriC complex binds and stabilizes one strand of the AT-rich DNA unwinding element (DUE), permitting loading of DNA polymerase. After initiation quickly degrades to an ADP-DnaA complex that is not apt for DNA replication. Binds acidic phospholipids. This is Chromosomal replication initiator protein DnaA from Wolbachia pipientis wMel.